The primary structure comprises 220 residues: Large ribosomal subunit protein uL10c (220 aa).

The N-terminal 41 residues, 1-41 (MEVALLSFSSSLSPLCHQRISTLTPKTSNSPNYPRLPVIRS), are a transit peptide targeting the chloroplast.

This sequence belongs to the universal ribosomal protein uL10 family. In terms of assembly, part of the 50S ribosomal subunit.

The protein localises to the plastid. It localises to the chloroplast. This protein binds directly to 23S ribosomal RNA. This Arabidopsis thaliana (Mouse-ear cress) protein is Large ribosomal subunit protein uL10c (RPL10).